The following is a 246-amino-acid chain: Probable transcriptional regulatory protein Rmag_0394 (246 aa).

It belongs to the TACO1 family.

Its subcellular location is the cytoplasm. The sequence is that of Probable transcriptional regulatory protein Rmag_0394 from Ruthia magnifica subsp. Calyptogena magnifica.